The following is a 245-amino-acid chain: MASRVNIVQVQILDNPAMFVDKFKMEITFEVFEHLPHDLEWELVYVGSGTSRDFDQVLDSALVGPIPEGRHKFVFDAEHPDISKIPVEDIVGVSVLLLRCKYNDQEFINMGWFVANEYTDEELKENPPAKPLIEKLSRKIETEDLRVTTFPIRWTDEDPVAEPVDEEANKVFDEDDLMPLHDDGQDDDEEEEDDDETGPNTEEVDLNESFNERMANAHDGTEQKNGEESMEHDGASGDVEMGDKH.

The span at 157–166 (EDPVAEPVDE) shows a compositional bias: acidic residues. Residues 157–245 (EDPVAEPVDE…SGDVEMGDKH (89 aa)) form a disordered region. Over residues 167–183 (EANKVFDEDDLMPLHDD) the composition is skewed to basic and acidic residues. The segment covering 184-206 (GQDDDEEEEDDDETGPNTEEVDL) has biased composition (acidic residues). Residues 215–245 (ANAHDGTEQKNGEESMEHDGASGDVEMGDKH) show a composition bias toward basic and acidic residues.

It belongs to the ASF1 family. Interacts with histone H3 and histone H4.

It is found in the nucleus. In terms of biological role, histone chaperone that facilitates histone deposition and histone exchange and removal during nucleosome assembly and disassembly. This Caenorhabditis elegans protein is Probable histone chaperone asf-1-like protein (asfl-1).